The following is a 330-amino-acid chain: Biotin synthase (330 aa).

The region spanning 55-282 (NAVQRSTLLS…TAYVRLSAGR (228 aa)) is the Radical SAM core domain. Residues cysteine 70, cysteine 74, and cysteine 77 each contribute to the [4Fe-4S] cluster site. Positions 114, 145, 205, and 277 each coordinate [2Fe-2S] cluster.

The protein belongs to the radical SAM superfamily. Biotin synthase family. In terms of assembly, homodimer. [4Fe-4S] cluster serves as cofactor. [2Fe-2S] cluster is required as a cofactor.

The catalysed reaction is (4R,5S)-dethiobiotin + (sulfur carrier)-SH + 2 reduced [2Fe-2S]-[ferredoxin] + 2 S-adenosyl-L-methionine = (sulfur carrier)-H + biotin + 2 5'-deoxyadenosine + 2 L-methionine + 2 oxidized [2Fe-2S]-[ferredoxin]. Its pathway is cofactor biosynthesis; biotin biosynthesis; biotin from 7,8-diaminononanoate: step 2/2. Catalyzes the conversion of dethiobiotin (DTB) to biotin by the insertion of a sulfur atom into dethiobiotin via a radical-based mechanism. The sequence is that of Biotin synthase from Methylibium petroleiphilum (strain ATCC BAA-1232 / LMG 22953 / PM1).